The following is a 253-amino-acid chain: 5'-nucleotidase SurE 2 (253 aa).

A divalent metal cation contacts are provided by Asp-8, Asp-9, Ser-39, and Asn-92.

The protein belongs to the SurE nucleotidase family. A divalent metal cation is required as a cofactor.

The protein localises to the cytoplasm. It catalyses the reaction a ribonucleoside 5'-phosphate + H2O = a ribonucleoside + phosphate. Nucleotidase that shows phosphatase activity on nucleoside 5'-monophosphates. This Burkholderia lata (strain ATCC 17760 / DSM 23089 / LMG 22485 / NCIMB 9086 / R18194 / 383) protein is 5'-nucleotidase SurE 2.